The chain runs to 372 residues: Alanine racemase (372 aa).

The Proton acceptor; specific for D-alanine role is filled by Lys35. The residue at position 35 (Lys35) is an N6-(pyridoxal phosphate)lysine. Arg143 contributes to the substrate binding site. Tyr268 acts as the Proton acceptor; specific for L-alanine in catalysis. A substrate-binding site is contributed by Met316.

This sequence belongs to the alanine racemase family. Pyridoxal 5'-phosphate is required as a cofactor.

It catalyses the reaction L-alanine = D-alanine. The protein operates within amino-acid biosynthesis; D-alanine biosynthesis; D-alanine from L-alanine: step 1/1. In terms of biological role, catalyzes the interconversion of L-alanine and D-alanine. May also act on other amino acids. This Shewanella frigidimarina (strain NCIMB 400) protein is Alanine racemase (alr).